The chain runs to 631 residues: MSATKLTRREQRAQAQHFIDTLEGTAFPNSKRIYITGTQPGVRVPMREIQLSPTLIGGSKEQPQYEENEAIPVYDASGPYGDPQIAINVQQGLAKLRQPWIDARGDTEELTVRSSDYTKARLADDGLDELRFSGVLTPKRAKAGRRVTQLHYARRGIITPEMEFIAIRENMGRERIRSEVLRHQHPGMSFGARLPENITAEFVRDEVAAGRAIIPANINHPESEPMIIGRNFLVKVNANIGNSAVTSSIEEEVEKLVWSTRWGADTVMDLSTGRYIHETREWILRNSPVPIGTVPIYQALEKVNGIAEDLTWEAFRDTLLEQAEQGVDYFTIHAGVLLRYVPMTAKRLTGIVSRGGSIMAKWCLSHHQENFLYQHFREICEICAAYDVSLSLGDGLRPGSVQDANDEAQFAELHTLGELTKIAWEYDVQVMIEGPGHVPMQMIRRNMTEELEQCHEAPFYTLGPLTTDIAPGYDHFTSGIGAAMIGWFGCAMLCYVTPKEHLGLPNKEDVKQGLITYKIAAHAADLAKGHPGAQIRDNAMSKARFEFRWEDQFNLALDPFTARAYHDETLPQESGKVAHFCSMCGPKFCSMKISQEVRDYAAAQTIEVGMADMSENFRARGGEIYLRKEEA.

Residues N239, M268, Y297, H333, 353–355, 394–397, and E433 contribute to the substrate site; these read SRG and DGLR. H437 contributes to the Zn(2+) binding site. Y460 contributes to the substrate binding site. Residue H501 coordinates Zn(2+). Positions 581, 584, and 589 each coordinate [4Fe-4S] cluster.

This sequence belongs to the ThiC family. Homodimer. It depends on [4Fe-4S] cluster as a cofactor.

The enzyme catalyses 5-amino-1-(5-phospho-beta-D-ribosyl)imidazole + S-adenosyl-L-methionine = 4-amino-2-methyl-5-(phosphooxymethyl)pyrimidine + CO + 5'-deoxyadenosine + formate + L-methionine + 3 H(+). The protein operates within cofactor biosynthesis; thiamine diphosphate biosynthesis. Functionally, catalyzes the synthesis of the hydroxymethylpyrimidine phosphate (HMP-P) moiety of thiamine from aminoimidazole ribotide (AIR) in a radical S-adenosyl-L-methionine (SAM)-dependent reaction. This Escherichia coli (strain SMS-3-5 / SECEC) protein is Phosphomethylpyrimidine synthase.